Here is a 139-residue protein sequence, read N- to C-terminus: Large ribosomal subunit protein uL16 (139 aa).

This sequence belongs to the universal ribosomal protein uL16 family. Part of the 50S ribosomal subunit.

In terms of biological role, binds 23S rRNA and is also seen to make contacts with the A and possibly P site tRNAs. The chain is Large ribosomal subunit protein uL16 from Prosthecochloris aestuarii (strain DSM 271 / SK 413).